The sequence spans 371 residues: Chorismate synthase (371 aa).

Residues Arg-48 and Arg-54 each coordinate NADP(+). FMN contacts are provided by residues 130–132 (RSS), 242–243 (NA), Gly-287, 302–306 (KPTSS), and Arg-328.

This sequence belongs to the chorismate synthase family. Homotetramer. The cofactor is FMNH2.

It carries out the reaction 5-O-(1-carboxyvinyl)-3-phosphoshikimate = chorismate + phosphate. It functions in the pathway metabolic intermediate biosynthesis; chorismate biosynthesis; chorismate from D-erythrose 4-phosphate and phosphoenolpyruvate: step 7/7. Its function is as follows. Catalyzes the anti-1,4-elimination of the C-3 phosphate and the C-6 proR hydrogen from 5-enolpyruvylshikimate-3-phosphate (EPSP) to yield chorismate, which is the branch point compound that serves as the starting substrate for the three terminal pathways of aromatic amino acid biosynthesis. This reaction introduces a second double bond into the aromatic ring system. The protein is Chorismate synthase of Azorhizobium caulinodans (strain ATCC 43989 / DSM 5975 / JCM 20966 / LMG 6465 / NBRC 14845 / NCIMB 13405 / ORS 571).